We begin with the raw amino-acid sequence, 257 residues long: S-methyl-5'-thioadenosine phosphorylase (257 aa).

Phosphate-binding positions include serine 10 and 50–51 (RH). Position 180 (methionine 180) interacts with substrate. Threonine 181 contributes to the phosphate binding site. Residue 204-206 (DYD) participates in substrate binding.

It belongs to the PNP/MTAP phosphorylase family. MTAP subfamily. Homohexamer. Dimer of a homotrimer.

It carries out the reaction S-methyl-5'-thioadenosine + phosphate = 5-(methylsulfanyl)-alpha-D-ribose 1-phosphate + adenine. The protein operates within amino-acid biosynthesis; L-methionine biosynthesis via salvage pathway; S-methyl-5-thio-alpha-D-ribose 1-phosphate from S-methyl-5'-thioadenosine (phosphorylase route): step 1/1. Its function is as follows. Catalyzes the reversible phosphorylation of S-methyl-5'-thioadenosine (MTA) to adenine and 5-methylthioribose-1-phosphate. Involved in the breakdown of MTA, a major by-product of polyamine biosynthesis. Responsible for the first step in the methionine salvage pathway after MTA has been generated from S-adenosylmethionine. Has broad substrate specificity with 6-aminopurine nucleosides as preferred substrates. The sequence is that of S-methyl-5'-thioadenosine phosphorylase (mntP) from Pyrococcus abyssi (strain GE5 / Orsay).